The following is an 89-amino-acid chain: Probable Fe(2+)-trafficking protein (89 aa).

It belongs to the Fe(2+)-trafficking protein family.

Could be a mediator in iron transactions between iron acquisition and iron-requiring processes, such as synthesis and/or repair of Fe-S clusters in biosynthetic enzymes. The protein is Probable Fe(2+)-trafficking protein of Stenotrophomonas maltophilia (strain R551-3).